Here is an 846-residue protein sequence, read N- to C-terminus: Exonuclease 1 (846 aa).

The tract at residues 1–99 (MGIQGLLQFI…RSRRERRQAN (99 aa)) is N-domain. Residues D30, D78, E150, D152, D171, D173, D225, and D270 each coordinate Mg(2+). The segment at 129 to 387 (MAHKVIKAAR…RPESGTVSDA (259 aa)) is interaction with MSH3. Positions 138-229 (RSQGVDCLVA…ILSGCDYLSS (92 aa)) are I-domain. Residues 372-396 (HRNYSPRPESGTVSDAPQLKENPST) form a disordered region. The residue at position 376 (S376) is a Phosphoserine. The segment covering 382–396 (GTVSDAPQLKENPST) has biased composition (polar residues). Residues 388 to 490 (PQLKENPSTV…NKFATFLQRK (103 aa)) form an interaction with MLH1 region. The short motif at 418 to 421 (KRPR) is the Nuclear localization signal element. S422 and S454 each carry phosphoserine. The residue at position 482 (K482) is an N6-acetyllysine. A Phosphothreonine modification is found at T581. Residues S598 and S610 each carry the phosphoserine modification. Residues 600-846 (PTLGTLRSCF…CGRVQRAIFQ (247 aa)) form an interaction with MSH2 region. Positions 618-781 (FSRTPSPSPS…SIQKRKHHNA (164 aa)) are disordered. Composition is skewed to polar residues over residues 620–631 (RTPSPSPSTALQ) and 639–654 (SPTS…VSQL). Residue T621 is modified to Phosphothreonine. Phosphoserine is present on residues S623, S639, S660, and S674. Residues 655–671 (KSEESSDDESHPLREEA) are compositionally biased toward basic and acidic residues. Polar residues-rich tracts occupy residues 672–689 (CSSQ…SSNA), 713–722 (DSQSDQTSKL), and 743–754 (KSSSADSLSTTK). S714 bears the Phosphoserine; by ATR mark. At S746 the chain carries Phosphoserine. Residues 787-846 (LQIKLNELWKNFGFKKDSEKLPPCKKPLSPVRDNIQLTPEAEEDIFNKPECGRVQRAIFQ) form an interaction with MLH1 region.

The protein belongs to the XPG/RAD2 endonuclease family. EXO1 subfamily. In terms of assembly, interacts with the MLH1-PMS2 heterodimer via MLH1. Interacts with MSH3. Interacts with the MSH2-MSH6 heterodimer via MSH2, and this interaction may increase the processivity of the 5'-&gt;3' exonuclease activity. Interacts with PCNA, and this interaction may both stimulate the cryptic 3'-&gt;5' exonuclease activity and suppress the 5'-&gt;3' exonuclease activity. Interacts with WRN, and this interaction stimulates both the 5'-&gt;3' exonuclease activity and cleavage of 5'-overhanging flap structures. Interacts with RECQL/RECQ1, and this interaction stimulates cleavage of 5'-overhanging flap structures. Interacts with DNA helicase ZGRF1; the interaction is increased following DNA damage induction. Requires Mg(2+) as cofactor. Phosphorylated upon DNA damage and in response to agents stalling DNA replication, probably by ATM or ATR. Phosphorylation at Ser-454, Thr-621 and Ser-714 is induced upon DNA-damage caused by treatment with hydroxyurea (HU) but not upon IR treatment. The HU-induced EXO1 triple phosphorylation facilitates destabilization/degradation of the protein. Highly expressed in bone marrow, testis and thymus. Expressed at lower levels in colon, lymph nodes, ovary, placenta, prostate, small intestine, spleen and stomach.

It is found in the nucleus. Functionally, 5'-&gt;3' double-stranded DNA exonuclease which may also possess a cryptic 3'-&gt;5' double-stranded DNA exonuclease activity. Functions in DNA mismatch repair (MMR) to excise mismatch-containing DNA tracts directed by strand breaks located either 5' or 3' to the mismatch. Also exhibits endonuclease activity against 5'-overhanging flap structures similar to those generated by displacement synthesis when DNA polymerase encounters the 5'-end of a downstream Okazaki fragment. Required for somatic hypermutation (SHM) and class switch recombination (CSR) of immunoglobulin genes. Essential for male and female meiosis. The sequence is that of Exonuclease 1 (EXO1) from Homo sapiens (Human).